The chain runs to 284 residues: Nucleotide-binding protein NMC0691 (284 aa).

8–15 contributes to the ATP binding site; that stretch reads GLSGSGKS. 58-61 is a GTP binding site; the sequence is DVRS.

The protein belongs to the RapZ-like family.

Functionally, displays ATPase and GTPase activities. The sequence is that of Nucleotide-binding protein NMC0691 from Neisseria meningitidis serogroup C / serotype 2a (strain ATCC 700532 / DSM 15464 / FAM18).